Consider the following 204-residue polypeptide: Crossover junction endodeoxyribonuclease RuvC (204 aa).

Active-site residues include Asp-7, Glu-68, and Asp-141. Residues Asp-7, Glu-68, and Asp-141 each contribute to the Mg(2+) site. The tract at residues 164 to 204 (QAVAAHRTSGASRTPGAAGTPGPSRTPGAPGTSRTLKGRTA) is disordered.

Belongs to the RuvC family. As to quaternary structure, homodimer which binds Holliday junction (HJ) DNA. The HJ becomes 2-fold symmetrical on binding to RuvC with unstacked arms; it has a different conformation from HJ DNA in complex with RuvA. In the full resolvosome a probable DNA-RuvA(4)-RuvB(12)-RuvC(2) complex forms which resolves the HJ. Requires Mg(2+) as cofactor.

It is found in the cytoplasm. It carries out the reaction Endonucleolytic cleavage at a junction such as a reciprocal single-stranded crossover between two homologous DNA duplexes (Holliday junction).. Its function is as follows. The RuvA-RuvB-RuvC complex processes Holliday junction (HJ) DNA during genetic recombination and DNA repair. Endonuclease that resolves HJ intermediates. Cleaves cruciform DNA by making single-stranded nicks across the HJ at symmetrical positions within the homologous arms, yielding a 5'-phosphate and a 3'-hydroxyl group; requires a central core of homology in the junction. The consensus cleavage sequence is 5'-(A/T)TT(C/G)-3'. Cleavage occurs on the 3'-side of the TT dinucleotide at the point of strand exchange. HJ branch migration catalyzed by RuvA-RuvB allows RuvC to scan DNA until it finds its consensus sequence, where it cleaves and resolves the cruciform DNA. The protein is Crossover junction endodeoxyribonuclease RuvC of Streptomyces griseus subsp. griseus (strain JCM 4626 / CBS 651.72 / NBRC 13350 / KCC S-0626 / ISP 5235).